Consider the following 287-residue polypeptide: Formamidopyrimidine-DNA glycosylase (287 aa).

P2 acts as the Schiff-base intermediate with DNA in catalysis. The active-site Proton donor is the E3. The active-site Proton donor; for beta-elimination activity is the K61. DNA contacts are provided by H95, R115, and R157. The segment at 243 to 277 adopts an FPG-type zinc-finger fold; that stretch reads NVYGRADQPCRRCGEPVRREAFMNRSSFSCPRCQP. R267 (proton donor; for delta-elimination activity) is an active-site residue.

It belongs to the FPG family. Monomer. It depends on Zn(2+) as a cofactor.

It catalyses the reaction Hydrolysis of DNA containing ring-opened 7-methylguanine residues, releasing 2,6-diamino-4-hydroxy-5-(N-methyl)formamidopyrimidine.. The catalysed reaction is 2'-deoxyribonucleotide-(2'-deoxyribose 5'-phosphate)-2'-deoxyribonucleotide-DNA = a 3'-end 2'-deoxyribonucleotide-(2,3-dehydro-2,3-deoxyribose 5'-phosphate)-DNA + a 5'-end 5'-phospho-2'-deoxyribonucleoside-DNA + H(+). Involved in base excision repair of DNA damaged by oxidation or by mutagenic agents. Acts as a DNA glycosylase that recognizes and removes damaged bases. Has a preference for oxidized purines, such as 7,8-dihydro-8-oxoguanine (8-oxoG). Has AP (apurinic/apyrimidinic) lyase activity and introduces nicks in the DNA strand. Cleaves the DNA backbone by beta-delta elimination to generate a single-strand break at the site of the removed base with both 3'- and 5'-phosphates. This is Formamidopyrimidine-DNA glycosylase from Salinispora tropica (strain ATCC BAA-916 / DSM 44818 / JCM 13857 / NBRC 105044 / CNB-440).